We begin with the raw amino-acid sequence, 441 residues long: Histidinol dehydrogenase (441 aa).

Tyrosine 136, glutamine 197, and asparagine 220 together coordinate NAD(+). 3 residues coordinate substrate: serine 243, glutamine 265, and histidine 268. 2 residues coordinate Zn(2+): glutamine 265 and histidine 268. Catalysis depends on proton acceptor residues glutamate 333 and histidine 334. Substrate contacts are provided by histidine 334, aspartate 367, glutamate 421, and histidine 426. Aspartate 367 lines the Zn(2+) pocket. Histidine 426 contacts Zn(2+).

This sequence belongs to the histidinol dehydrogenase family. The cofactor is Zn(2+).

The enzyme catalyses L-histidinol + 2 NAD(+) + H2O = L-histidine + 2 NADH + 3 H(+). It participates in amino-acid biosynthesis; L-histidine biosynthesis; L-histidine from 5-phospho-alpha-D-ribose 1-diphosphate: step 9/9. In terms of biological role, catalyzes the sequential NAD-dependent oxidations of L-histidinol to L-histidinaldehyde and then to L-histidine. The sequence is that of Histidinol dehydrogenase from Pseudomonas putida (strain ATCC 47054 / DSM 6125 / CFBP 8728 / NCIMB 11950 / KT2440).